We begin with the raw amino-acid sequence, 327 residues long: Short chain isoprenyl diphosphate synthase (327 aa).

The isopentenyl diphosphate site is built by lysine 48, arginine 51, and histidine 80. 2 residues coordinate Mg(2+): aspartate 87 and aspartate 91. Arginine 96 contacts an all-trans-polyprenyl diphosphate. Arginine 97 is a binding site for isopentenyl diphosphate. An all-trans-polyprenyl diphosphate-binding residues include lysine 176, threonine 177, glutamine 214, lysine 231, and lysine 241.

Belongs to the FPP/GGPP synthase family. Homodimer. Mg(2+) is required as a cofactor.

It is found in the cytoplasm. This Methanocaldococcus jannaschii (strain ATCC 43067 / DSM 2661 / JAL-1 / JCM 10045 / NBRC 100440) (Methanococcus jannaschii) protein is Short chain isoprenyl diphosphate synthase (idsA).